Consider the following 129-residue polypeptide: uncharacterized protein (129 aa).

Over residues 1–13 (MSDVAETVVAQEP) the composition is skewed to low complexity. A disordered region spans residues 1-129 (MSDVAETVVA…SGDAPAVAAE (129 aa)). Basic and acidic residues predominate over residues 34–94 (IDEKTSEQNG…KRVSSAHEEA (61 aa)). Positions 117 to 129 (VAASGDAPAVAAE) are enriched in low complexity.

This is an uncharacterized protein from Caenorhabditis elegans.